A 340-amino-acid chain; its full sequence is Fructose-bisphosphate aldolase (340 aa).

Ser53 contributes to the D-glyceraldehyde 3-phosphate binding site. Asp95 acts as the Proton donor in catalysis. His96, Asp131, Glu161, and His212 together coordinate Zn(2+). Gly213 contacts dihydroxyacetone phosphate. A Zn(2+)-binding site is contributed by His249. Dihydroxyacetone phosphate is bound by residues 250 to 252 (GGS) and 271 to 274 (NLDT).

It belongs to the class II fructose-bisphosphate aldolase family. Zn(2+) is required as a cofactor.

It carries out the reaction beta-D-fructose 1,6-bisphosphate = D-glyceraldehyde 3-phosphate + dihydroxyacetone phosphate. It participates in carbohydrate degradation; glycolysis; D-glyceraldehyde 3-phosphate and glycerone phosphate from D-glucose: step 4/4. Functionally, catalyzes the aldol condensation of dihydroxyacetone phosphate (DHAP or glycerone-phosphate) with glyceraldehyde 3-phosphate (G3P) to form fructose 1,6-bisphosphate (FBP) in gluconeogenesis and the reverse reaction in glycolysis. The protein is Fructose-bisphosphate aldolase (fba) of Streptomyces galbus.